The sequence spans 86 residues: Large ribosomal subunit protein uL23 (86 aa).

The protein belongs to the universal ribosomal protein uL23 family. In terms of assembly, part of the 50S ribosomal subunit. Contacts protein L29.

Its function is as follows. Binds to 23S rRNA. One of the proteins that surrounds the polypeptide exit tunnel on the outside of the ribosome. In Methanococcus maripaludis (strain C7 / ATCC BAA-1331), this protein is Large ribosomal subunit protein uL23.